The following is a 189-amino-acid chain: Peroxiredoxin sll1621 (189 aa).

A Thioredoxin domain is found at 2 to 177 (TPERVPSVVF…MLAYLKGAEA (176 aa)). The active-site Cysteine sulfenic acid (-SOH) intermediate (for peroxiredoxin activity) is the Cys55.

It belongs to the peroxiredoxin family. Prx5 subfamily. Monomer.

The enzyme catalyses a hydroperoxide + 2 glutathione = an alcohol + glutathione disulfide + H2O. Thiol-specific peroxidase that catalyzes the reduction of hydrogen peroxide and organic hydroperoxides to water and alcohols, respectively. Plays a role in cell protection against oxidative stress by detoxifying peroxides. This is Peroxiredoxin sll1621 from Synechocystis sp. (strain ATCC 27184 / PCC 6803 / Kazusa).